The primary structure comprises 316 residues: Glycine--tRNA ligase alpha subunit (316 aa).

It belongs to the class-II aminoacyl-tRNA synthetase family. Tetramer of two alpha and two beta subunits.

The protein resides in the cytoplasm. The catalysed reaction is tRNA(Gly) + glycine + ATP = glycyl-tRNA(Gly) + AMP + diphosphate. The polypeptide is Glycine--tRNA ligase alpha subunit (Paracoccus denitrificans (strain Pd 1222)).